Reading from the N-terminus, the 358-residue chain is Uroporphyrinogen decarboxylase (358 aa).

Residues 29-33 (RQAGR), aspartate 79, tyrosine 156, threonine 211, and histidine 329 contribute to the substrate site.

It belongs to the uroporphyrinogen decarboxylase family. In terms of assembly, homodimer.

The protein resides in the cytoplasm. It carries out the reaction uroporphyrinogen III + 4 H(+) = coproporphyrinogen III + 4 CO2. It participates in porphyrin-containing compound metabolism; protoporphyrin-IX biosynthesis; coproporphyrinogen-III from 5-aminolevulinate: step 4/4. Functionally, catalyzes the decarboxylation of four acetate groups of uroporphyrinogen-III to yield coproporphyrinogen-III. In Idiomarina loihiensis (strain ATCC BAA-735 / DSM 15497 / L2-TR), this protein is Uroporphyrinogen decarboxylase.